Here is a 136-residue protein sequence, read N- to C-terminus: Large-conductance mechanosensitive channel (136 aa).

2 helical membrane-spanning segments follow: residues 10-30 and 76-96; these read FAMR…AAFG and GAFI…FIAI.

Belongs to the MscL family. In terms of assembly, homopentamer.

It is found in the cell inner membrane. Functionally, channel that opens in response to stretch forces in the membrane lipid bilayer. May participate in the regulation of osmotic pressure changes within the cell. In Pectobacterium atrosepticum (strain SCRI 1043 / ATCC BAA-672) (Erwinia carotovora subsp. atroseptica), this protein is Large-conductance mechanosensitive channel.